Reading from the N-terminus, the 413-residue chain is Multidrug resistance protein MdtA (413 aa).

The first 20 residues, 1–20 (MKGSNTFRWAIAIGVVVAAA), serve as a signal peptide directing secretion. Disordered regions lie at residues 31 to 57 (SPTA…RDGP) and 392 to 413 (PQTT…GARA). Positions 397-413 (ADEKSPSRHEGQKGARA) are enriched in basic and acidic residues.

Belongs to the membrane fusion protein (MFP) (TC 8.A.1) family. Part of a tripartite efflux system composed of MdtA, MdtB and MdtC.

It is found in the cell inner membrane. This Salmonella heidelberg (strain SL476) protein is Multidrug resistance protein MdtA.